Here is a 336-residue protein sequence, read N- to C-terminus: Probable magnesium transporter NIPA2 (336 aa).

Over 1-7 (MEEMSPD) the chain is Extracellular. The helical transmembrane segment at 8–28 (NIHGVILAVSSSIFIGSSFII) threads the bilayer. Topologically, residues 29–55 (KKKGLKKAGVSGARAGEGGYGYLYEPW) are cytoplasmic. The helical transmembrane segment at 56–76 (WWAGMITMIVGEIANFAAYAF) threads the bilayer. The Extracellular segment spans residues 77–79 (APA). The helical transmembrane segment at 80-100 (ILVTPLGALSIIFSAVLAHFI) threads the bilayer. Topologically, residues 101-104 (LEEK) are cytoplasmic. A helical transmembrane segment spans residues 105–125 (LHMFGILGCVLCVVGSTTIVL). Over 126 to 145 (HAPHEQGIESVKQVWHLATE) the chain is Extracellular. Residues 146 to 166 (PGFLAYSAVVLVVVLALIFYY) form a helical membrane-spanning segment. The Cytoplasmic segment spans residues 167 to 179 (EPRYGKTHMIVYV). Residues 180-200 (GICSLMGSLTVMSVKAVAIAI) form a helical membrane-spanning segment. At 201 to 212 (KLTFSGMNQFKY) the chain is on the extracellular side. The helical transmembrane segment at 213-233 (FHAWIFIIVVTICCILQINYL) threads the bilayer. At 234-244 (NKALDNFNTAV) the chain is on the cytoplasmic side. Residues 245-265 (ISPVYYVMFTTFTILASMIMF) traverse the membrane as a helical segment. Residues 266–272 (KDWASQS) are Extracellular-facing. The helical transmembrane segment at 273 to 293 (GLQIATELCGFVTILSGTFLL) threads the bilayer. The Cytoplasmic portion of the chain corresponds to 294 to 336 (HKTKDMGNSTSLRGSTSHSPRDTPVFINSGSSRSSNSTRPAIL). The interval 303 to 336 (TSLRGSTSHSPRDTPVFINSGSSRSSNSTRPAIL) is disordered. Positions 321-330 (NSGSSRSSNS) are enriched in low complexity.

Belongs to the NIPA (TC 2.A.7) family. In terms of assembly, homodimer.

The protein localises to the cell membrane. Its subcellular location is the early endosome. Functionally, acts as a Mg(2+) transporter. Can also transport other divalent cations such as Fe(2+), Sr(2+), Ba(2+), Mn(2+) and Co(2+) but to a much less extent than Mg(2+). The protein is Probable magnesium transporter NIPA2 of Arabidopsis thaliana (Mouse-ear cress).